A 306-amino-acid chain; its full sequence is Dermonecrotic toxin LiSicTox-alphaIA1a (306 aa).

An N-terminal signal peptide occupies residues 1 to 18 (MLPYIVLVLGCWSVLSQA). A propeptide spanning residues 19–26 (AQTDDEER) is cleaved from the precursor. The active site involves H38. Residues E58 and D60 each contribute to the Mg(2+) site. H74 (nucleophile) is an active-site residue. Disulfide bonds link C78–C84 and C80–C223. D118 is a binding site for Mg(2+).

Belongs to the arthropod phospholipase D family. Class II subfamily. Class IIa sub-subfamily. Mg(2+) serves as cofactor. In terms of tissue distribution, expressed by the venom gland.

The protein localises to the secreted. It carries out the reaction an N-(acyl)-sphingosylphosphocholine = an N-(acyl)-sphingosyl-1,3-cyclic phosphate + choline. The enzyme catalyses an N-(acyl)-sphingosylphosphoethanolamine = an N-(acyl)-sphingosyl-1,3-cyclic phosphate + ethanolamine. It catalyses the reaction a 1-acyl-sn-glycero-3-phosphocholine = a 1-acyl-sn-glycero-2,3-cyclic phosphate + choline. The catalysed reaction is a 1-acyl-sn-glycero-3-phosphoethanolamine = a 1-acyl-sn-glycero-2,3-cyclic phosphate + ethanolamine. It carries out the reaction 1-hexadecanoyl-sn-glycero-3-phosphocholine = 1-hexadecanoyl-sn-glycero-2,3-cyclic phosphate + choline. Its activity is regulated as follows. Catalytic activity and hemolysis are inhibited by divalent ion chelators (1,10-phenanthroline, EDTA, and EGTA). Functionally, dermonecrotic toxins cleave the phosphodiester linkage between the phosphate and headgroup of certain phospholipids (sphingolipid and lysolipid substrates), forming an alcohol (often choline) and a cyclic phosphate. This toxin acts on sphingomyelin (SM) with high activity. It discriminate between the number of carbon atoms in the substrates, since it prefers SM with six carbons in the fatty acid chain (SM6:0) to other SMs (SM12:0 &gt; SM16:0 &gt; SM18:0 &gt; SM2:0 &gt; SM24:0). It also acts on lysophosphatidylcholine (LPC) (LPC16:0 = LPC12:0 &gt; LPC18:0), and lyso-platelet activating factor (LPAF, an alkyl-LPC) but not on phosphatidylcholine (PC). It may also act on ceramide phosphoethanolamine (CPE), lysophosphatidylcholine (LPC) and lysophosphatidylethanolamine (LPE), but not on lysophosphatidylserine (LPS), and lysophosphatidylglycerol (LPG). It acts by transphosphatidylation, releasing exclusively cyclic phosphate products as second products. In vivo, it induces dermonecrosis, vascular permeability, platelet aggregation, inflammatory response, edema and cytotoxicity against renal epithelial cells. It causes direct nephrotoxicity and is directly toxic to liver. It also induces hemolysis in a complement-dependent manner as well as in a complement-independent manner. The hemolysis provoked in a complement-independent manner is composed of several steps. The toxin binds to erythrocyte membranes, hydrolyzes membrane phospholipids (SM and LPC) thus generating metabolism products that cause hemolysis, probably by provoking an increase of calcium inside cells. The calcium influx is due to the opening of L-type calcium channels, since L-type calcium channel blockers inhibit calcium influx. Is lethal to mice when intraperitoneally injected. This is Dermonecrotic toxin LiSicTox-alphaIA1a from Loxosceles intermedia (Brown spider).